Reading from the N-terminus, the 170-residue chain is Probable deoxyuridine 5'-triphosphate nucleotidohydrolase (170 aa).

This sequence belongs to the dCTP deaminase family. Archaeal dUTPase subfamily.

It catalyses the reaction dUTP + H2O = dUMP + diphosphate + H(+). Its pathway is pyrimidine metabolism; dUMP biosynthesis; dUMP from dCTP (dUTP route): step 2/2. This enzyme is involved in nucleotide metabolism: it produces dUMP, the immediate precursor of thymidine nucleotides and it decreases the intracellular concentration of dUTP so that uracil cannot be incorporated into DNA. This is Probable deoxyuridine 5'-triphosphate nucleotidohydrolase from Methanococcoides burtonii (strain DSM 6242 / NBRC 107633 / OCM 468 / ACE-M).